A 310-amino-acid chain; its full sequence is Putative F-box protein PP2-B2 (310 aa).

The disordered stretch occupies residues 1-34 (MIQSTMGHKQSVDSRGKGRKVPGSSSMVQKHRVE). Residues 44-90 (PSLFDNLPEDCISNIISFTSPRDACVAASVSKTFESAVNSDSVWDKF) form the F-box domain.

This chain is Putative F-box protein PP2-B2 (PP2B2), found in Arabidopsis thaliana (Mouse-ear cress).